A 364-amino-acid chain; its full sequence is MKKAILMMTFGSPEEITFEGVADFFTNIRRGVRPQDHEIQTLYDNYVRIGGTPLQKITRQEVTLVEARLGNEYSVYFANKFSSPFIPDVIGQMEADGIEQCICLILEPHYSFYSVMGYEKFLESKQIQFLVIKDWYQEEALLNYWADEIAKILKEEVKQDSFKVIFSAHSVPIFALDFGDPYIDQIFENSKLVAEKLGLSSEQYTNTWQSESDIGIPWIKPDVLEYLREQTEHPDHYIFVPISFISEHIEVLFDNDVECYDLCQEFGVNYHRPPMPNTDSRLIDALVNTVRVNENQEFKEFLPEEETFDELVPSDETKNILAESEDLQMPEFVKKLIEKKGRENVKMPYLIKKMLEKAGKLPKE.

The Fe-coproporphyrin III site is built by Arg29 and Tyr118. His169 and Glu250 together coordinate Fe(2+).

This sequence belongs to the ferrochelatase family.

The protein localises to the cytoplasm. It carries out the reaction Fe-coproporphyrin III + 2 H(+) = coproporphyrin III + Fe(2+). Its pathway is porphyrin-containing compound metabolism; protoheme biosynthesis. In terms of biological role, involved in coproporphyrin-dependent heme b biosynthesis. Catalyzes the insertion of ferrous iron into coproporphyrin III to form Fe-coproporphyrin III. The polypeptide is Coproporphyrin III ferrochelatase (Streptococcus pneumoniae serotype 2 (strain D39 / NCTC 7466)).